A 122-amino-acid polypeptide reads, in one-letter code: Large ribosomal subunit protein uL14 (122 aa).

The protein belongs to the universal ribosomal protein uL14 family. Part of the 50S ribosomal subunit. Forms a cluster with proteins L3 and L19. In the 70S ribosome, L14 and L19 interact and together make contacts with the 16S rRNA in bridges B5 and B8.

Functionally, binds to 23S rRNA. Forms part of two intersubunit bridges in the 70S ribosome. The polypeptide is Large ribosomal subunit protein uL14 (Exiguobacterium sibiricum (strain DSM 17290 / CCUG 55495 / CIP 109462 / JCM 13490 / 255-15)).